A 3291-amino-acid chain; its full sequence is Protocadherin-16 (3291 aa).

A signal peptide spans 1–35 (MQKELSVALSCPGMKSLRTLLPLLVLLGATVPGSW). At 36–2933 (GQAGSLDLQI…PDLNLLLVGA (2898 aa)) the chain is on the extracellular side. 27 consecutive Cadherin domains span residues 37 to 137 (QAGS…APAF), 138 to 249 (PQAR…APAF), 250 to 356 (NQSR…QPSM), 369 to 466 (VSEA…APAF), 476 to 572 (LPEV…EPQF), 573 to 679 (QRTF…PPQF), 680 to 784 (YPRE…PPIF), 785 to 888 (EQLQ…SPAF), 889 to 994 (PAPE…APRF), 995 to 1105 (DSPT…EPTF), 1100 to 1205 (SEEP…SPTF), 1218 to 1317 (IQVP…SPDL), 1326 to 1429 (VPVV…APTF), 1430 to 1539 (ARDP…APVF), 1539 to 1642 (FASP…APAF), 1643 to 1744 (PQQE…TPTF), 1745 to 1848 (GNTH…APVF), 1849 to 1953 (PVPS…APAF), 1976 to 2061 (LATL…GPRF), 2062 to 2164 (PRTS…APRF), 2165 to 2270 (LRPH…RPTI), 2270 to 2369 (IPQP…VPTF), 2370 to 2475 (SQSL…APSF), 2476 to 2595 (TLPH…PPVF), 2596 to 2699 (TRAS…GPAF), 2700 to 2806 (PLSL…DPVF), and 2807 to 2926 (LAPS…APDL). Asn-396 carries an N-linked (GlcNAc...) asparagine glycan. Asn-2354 is a glycosylation site (N-linked (GlcNAc...) asparagine). The segment at 2867–2886 (SRAPGSGTTTSGGGGRTRRE) is disordered. Residues 2934 to 2954 (VAASLGVVVVLALAALVLGLV) traverse the membrane as a helical segment. The Cytoplasmic segment spans residues 2955-3291 (RARSRKAEAA…EPPDDTELRI (337 aa)). Residues 2978 to 3033 (SLQKLGREPPSPPPSEHLYHQTLPSYGGPGAGGPYPRGGSLDPSHSSGRGSAEAAE) are disordered. Residues 3004-3013 (GGPGAGGPYP) are compositionally biased toward gly residues. Ser-3048 is subject to Phosphoserine. Disordered regions lie at residues 3051 to 3081 (SSLA…APDT) and 3226 to 3291 (ASHR…ELRI). The segment covering 3237-3259 (SLSSAAMSPSFSPSLSPLAARSP) has biased composition (low complexity). Residues 3270 to 3279 (PSASALSTES) show a composition bias toward polar residues.

As to quaternary structure, heterophilic interaction with FAT4; this interaction affects their respective protein levels. As to expression, expressed in the epicardium and atrioventricular sulcus (at protein level).

The protein resides in the cell membrane. Calcium-dependent cell-adhesion protein. Mediates functions in neuroprogenitor cell proliferation and differentiation. In the heart, has a critical role for proper morphogenesis of the mitral valve, acting in the regulation of cell migration involved in valve formation. This chain is Protocadherin-16 (Dchs1), found in Mus musculus (Mouse).